Reading from the N-terminus, the 281-residue chain is 2-dehydro-3-deoxyphosphooctonate aldolase (281 aa).

The protein belongs to the KdsA family.

Its subcellular location is the cytoplasm. The enzyme catalyses D-arabinose 5-phosphate + phosphoenolpyruvate + H2O = 3-deoxy-alpha-D-manno-2-octulosonate-8-phosphate + phosphate. It participates in carbohydrate biosynthesis; 3-deoxy-D-manno-octulosonate biosynthesis; 3-deoxy-D-manno-octulosonate from D-ribulose 5-phosphate: step 2/3. It functions in the pathway bacterial outer membrane biogenesis; lipopolysaccharide biosynthesis. This chain is 2-dehydro-3-deoxyphosphooctonate aldolase, found in Stutzerimonas stutzeri (strain A1501) (Pseudomonas stutzeri).